Reading from the N-terminus, the 149-residue chain is uncharacterized protein (149 aa).

Disordered regions lie at residues 24–74 and 129–149; these read TSQG…NDLE and AIQD…PRAP. Over residues 28–42 the composition is skewed to basic and acidic residues; the sequence is EDVKPEPKPEVDEKV. Residues 102 to 131 are a coiled coil; sequence SELESLKEKVSSATSMEELREIMEEFRAIQ.

This is an uncharacterized protein from Archaeoglobus fulgidus (strain ATCC 49558 / DSM 4304 / JCM 9628 / NBRC 100126 / VC-16).